The primary structure comprises 741 residues: MMVGTQNLGGSLPPLNSPKSYGITKPLSLAGPSSADIKRNVELEKYLVDEGLYESKDDTMRREEVLGRIDQIVKHWVKQLTQQRGYTDQMVEDANAVIFTFGSYRLGVHGPGADIDTLCVGPSYVNREEDFFIILHDILAEMEEVTELHPVPDAHVPVMKFKFQGIPIDLLYASISLLVVPQDLDISSSSVLCEVDEPTVRSLNGCRVADQILKLVPNFEHFRTTLRCLKYWAKKRGVYSNVTGFLGGVNWALLVARVCQLYPNAIPSMLVSRFFRVYTQWRWPNPVMLCAIEEDELGFPVWDRRKNHRDRYHLMPIITPAYPCMNSSYNVSQSTLRVMTEQFQFGNNILQEIELNKQHWSSLFEQYMFFEAYKNYLQVDIVAADAEDLLAWKGWVESRFRQLTLKIERDTNGMLMCHPQPNEYVDTARQFLHCAFFMGLQRAEGVGGQECQQFDIRGTVDEFRQEVNMYMFWKPGMDVFVSHVRRRQLPPFVFPNGYRRPRQSRHQNLPGGKSGEDGSVSHSGSVVERHAKRKNDSEMMDVRPEKPEKRASLSPQSLDIVSPENSAITTGWTPPVCNLRRPPSEEIEADNLNTECTELTDLARNECNSGSEQVLEVDSMAVVQECSDPAEPLGKCVTPDSVDVVACVSGQEENLDRNLRSVSISGTDSPLLPSRSCGQNRDYEGFGFPAANSDPMGKKNLYSQSGMSEDLQSNSLVSGMEKSEDRARSESFQKSQIRLLT.

Residues 101–103, 113–116, 114–116, aspartate 169, lysine 230, tyrosine 239, and 248–249 each bind ATP; these read FGS, ADID, DID, and GV. Mg(2+) is bound by residues aspartate 114, aspartate 116, and aspartate 169. The Nuclear localization signal motif lies at 485–492; sequence RRRQLPPF. 2 disordered regions span residues 494-556 and 683-741; these read FPNG…LSPQ and YEGF…RLLT. The span at 534-551 shows a compositional bias: basic and acidic residues; sequence KNDSEMMDVRPEKPEKRA. Polar residues predominate over residues 701–717; that stretch reads LYSQSGMSEDLQSNSLV. Basic and acidic residues predominate over residues 721–731; it reads EKSEDRARSES. Residues 732-741 show a composition bias toward polar residues; it reads FQKSQIRLLT.

Belongs to the poly(A) polymerase family. As to quaternary structure, monomer. Forms a complex with cleavage and polyadenylation specificity factor (CPSF) subunits CFIS2, FIPS3, PAPS1, PABN1, PABN2, PABN3 and FIPS5. Mg(2+) is required as a cofactor. The cofactor is Mn(2+). In terms of tissue distribution, mostly expressed in flowers (very active in pollen, sepals, styles, and stigmas), cotyledons and hypocotyls, and, to a lower extent, in roots (confined to the vascular tissue in the radicle) and leaves (in the vascular tissue and leaf petioles). Barely detected in stems. Active in the primary and secondary root systems.

Its subcellular location is the nucleus. It carries out the reaction RNA(n) + ATP = RNA(n)-3'-adenine ribonucleotide + diphosphate. Functionally, essential protein. Polymerase that creates the 3'-poly(A) tail of mRNA's. Also required for the endoribonucleolytic cleavage reaction at some polyadenylation sites. May acquire specificity through interaction with a cleavage and polyadenylation specificity factor (CPSF) at its C-terminus. This is Nuclear poly(A) polymerase 4 from Arabidopsis thaliana (Mouse-ear cress).